The following is a 154-amino-acid chain: Lipoprotein signal peptidase (154 aa).

3 consecutive transmembrane segments (helical) span residues 4–24 (IIIP…KLWI), 62–82 (LFTL…MKHI), and 84–104 (GSYW…GNFI). Active-site residues include aspartate 114 and aspartate 130. Residues 125–145 (IFNVADSYLTIGIICLMIALW) traverse the membrane as a helical segment.

This sequence belongs to the peptidase A8 family.

It is found in the cell membrane. It catalyses the reaction Release of signal peptides from bacterial membrane prolipoproteins. Hydrolyzes -Xaa-Yaa-Zaa-|-(S,diacylglyceryl)Cys-, in which Xaa is hydrophobic (preferably Leu), and Yaa (Ala or Ser) and Zaa (Gly or Ala) have small, neutral side chains.. Its pathway is protein modification; lipoprotein biosynthesis (signal peptide cleavage). Functionally, this protein specifically catalyzes the removal of signal peptides from prolipoproteins. This Streptococcus agalactiae serotype V (strain ATCC BAA-611 / 2603 V/R) protein is Lipoprotein signal peptidase.